Here is a 500-residue protein sequence, read N- to C-terminus: Putative antiporter subunit mnhD2 (500 aa).

The next 14 helical transmembrane spans lie at 2 to 22 (MSNL…ILVF), 32 to 52 (ILSI…LIYV), 78 to 98 (LSLL…AYGF), 108 to 128 (FHLP…FLTS), 130 to 150 (LFNL…LVTL), 161 to 181 (IVYV…IGML), 209 to 229 (ISLV…FMWL), 240 to 260 (LAAL…IRFF), 273 to 293 (TLLV…VIAY), 308 to 328 (IGFI…GAIF), 330 to 350 (LAND…LVYM), 368 to 388 (FFGV…PFSG), 403 to 423 (GNYI…YSLF), and 450 to 470 (GLLS…PVVL).

This sequence belongs to the CPA3 antiporters (TC 2.A.63) subunit D family. May form a heterooligomeric complex that consists of seven subunits: mnhA2, mnhB2, mnhC2, mnhD2, mnhE2, mnhF2 and mnhG2.

Its subcellular location is the cell membrane. In Staphylococcus epidermidis (strain ATCC 12228 / FDA PCI 1200), this protein is Putative antiporter subunit mnhD2 (mnhD2).